We begin with the raw amino-acid sequence, 513 residues long: Sulfhydryl oxidase 1 (513 aa).

The first 30 residues, 1–30 (MAAAAVARRVVLVLVLAAASLAAAPRGAAA), serve as a signal peptide directing secretion. Residues 31 to 174 (RSLGGREGPG…LLKWINNQMK (144 aa)) form the Thioredoxin domain. Asparagine 51 is a glycosylation site (N-linked (GlcNAc...) asparagine). Catalysis depends on nucleophile residues cysteine 76 and cysteine 79. A disulfide bridge connects residues cysteine 76 and cysteine 79. Residues asparagine 193 and asparagine 266 are each glycosylated (N-linked (GlcNAc...) asparagine). Residues cysteine 301 and cysteine 313 are joined by a disulfide bond. An ERV/ALR sulfhydryl oxidase domain is found at 304–406 (SKSETRGFSC…GDPLFPKVTW (103 aa)). FAD contacts are provided by residues arginine 309, tryptophan 316, histidine 320, glutamate 350, histidine 354, 377 to 384 (WSTHNKVN), lysine 403, and tryptophan 406. Cysteine 348 and cysteine 351 are oxidised to a cystine. Residues cysteine 412 and cysteine 415 are joined by a disulfide bond.

Requires FAD as cofactor.

The protein localises to the secreted. It catalyses the reaction 2 R'C(R)SH + O2 = R'C(R)S-S(R)CR' + H2O2. In terms of biological role, catalyzes the oxidation of sulfhydryl groups in peptide and protein thiols to disulfides with the reduction of oxygen to hydrogen peroxide. May contribute to disulfide bond formation in a variety of secreted proteins. This Oryza sativa subsp. japonica (Rice) protein is Sulfhydryl oxidase 1 (QSOX1).